Reading from the N-terminus, the 529-residue chain is Putative amidohydrolase YtcJ (529 aa).

This sequence belongs to the metallo-dependent hydrolases superfamily.

This Bacillus subtilis (strain 168) protein is Putative amidohydrolase YtcJ (ytcJ).